The chain runs to 322 residues: uncharacterized protein (322 aa).

Belongs to the glycosyltransferase 2 family.

This is an uncharacterized protein from Nostoc sp. (strain PCC 7120 / SAG 25.82 / UTEX 2576).